Consider the following 1030-residue polypeptide: Toll-like receptor 9 (1030 aa).

Positions 1-24 are cleaved as a signal peptide; that stretch reads MGPRCTLHPLSLLVQVTALAAALA. Residues 25–816 are Extracellular-facing; that stretch reads QGRLPAFLPC…LCLDETLSWN (792 aa). Cys-34 and Cys-44 are disulfide-bonded. 46-50 contacts DNA; sequence WLFLK. LRR repeat units lie at residues 61–84, 86–109, 121–146, 149–165, 166–189, 197–220, 222–241, 242–267, 282–305, 307–331, 332–355, 362–385, 389–412, 414–439, 469–493, 495–518, 519–542, 544–571, 573–597, 599–621, 626–649, 651–674, 675–698, 700–722, 723–746, and 748–771; these read RANV…DFVH, SSLR…HFPC, VPTL…SLVS, LSRT…LTGL, HALR…ALEV, LGNL…LPPS, ETLL…DLAN, LTAL…CREC, LSRL…WFRG, DRLQ…AFQG, LARL…HLHL, LRSL…TLQP, LPML…IFGA, PGLL…TREV, CKAF…MFAR, SRLE…QFVP, LTSL…SFTE, PRLE…SFVA, LPAL…LCSA, LCAL…LYLR, LRSL…ALDN, PKSL…SLTL, LPKL…SLPS, TQLR…FFAL, AKQL…WFGS, and VGNL…TFVG. The N-linked (GlcNAc...) asparagine glycan is linked to Asn-63. Residues 71–76 and 94–108 contribute to the DNA site; these read SNRIHH and KWNC…MHFP. A disulfide bridge links Cys-97 with Cys-109. Residue Asn-128 is glycosylated (N-linked (GlcNAc...) asparagine). Residues Tyr-131, Arg-151, and 178–180 each bind DNA; that span reads YYK. A disulfide bond links Cys-177 and Cys-183. A glycan (N-linked (GlcNAc...) asparagine) is linked at Asn-199. Tyr-207 contributes to the DNA binding site. N-linked (GlcNAc...) asparagine glycans are attached at residues Asn-209 and Asn-241. 2 cysteine pairs are disulfide-bonded: Cys-254-Cys-267 and Cys-257-Cys-264. Cys-257 carries the S-palmitoyl cysteine lipid modification. Arg-261 provides a ligand contact to DNA. Residue Cys-264 is the site of S-palmitoyl cysteine attachment. The N-linked (GlcNAc...) asparagine glycan is linked to Asn-339. Cys-469 and Cys-499 are disulfide-bonded. Residue Asn-512 is glycosylated (N-linked (GlcNAc...) asparagine). A glycan (N-linked (GlcNAc...) asparagine) is linked at Asn-566. N-linked (GlcNAc...) asparagine glycans are attached at residues Asn-668 and Asn-693. The N-linked (GlcNAc...) asparagine glycan is linked to Asn-730. Intrachain disulfides connect Cys-763–Cys-789 and Cys-765–Cys-808. Residues 817-837 form a helical membrane-spanning segment; it reads CFGISLLAMALGLVVPMLHHL. Topologically, residues 838–1030 are cytoplasmic; sequence CGWDLWYCFH…NFCRGPTTAE (193 aa). Residues 865-1010 form the TIR domain; that stretch reads LFYDAFVVFD…SFWAQLGTAL (146 aa).

It belongs to the Toll-like receptor family. Monomer and homodimer. Exists as a monomer in the absence of unmethylated cytidine-phosphate-guanosine (CpG) ligand. Proteolytic processing of an insertion loop (Z-loop) is required for homodimerization upon binding to the unmethylated CpG ligand leading to its activation. Interacts with MYD88 via their respective TIR domains. Interacts with BTK. Interacts (via transmembrane domain) with UNC93B1. Interacts with CD300LH; the interaction may promote full activation of TLR9-triggered innate responses. Interacts with CNPY3 and HSP90B1; this interaction is required for proper folding in the endoplasmic reticulum. Interacts with SMPDL3B. Interacts with CD82; this interaction is essential for TLR9-dependent myddosome formation in response to CpG stimulation. In terms of processing, activated by proteolytic cleavage of the flexible loop between repeats LRR14 and LRR15 within the ectodomain. Cleavage requires UNC93B1. Proteolytically processed by first removing the majority of the ectodomain by either asparagine endopeptidase (AEP) or a cathepsin followed by a trimming event that is solely cathepsin mediated and required for optimal receptor signaling. Post-translationally, palmitoylated by ZDHHC3 in the Golgi regulates TLR9 trafficking from the Golgi to endosomes. Depalmitoylation by PPT1 controls the release of TLR9 from UNC93B1 in endosomes.

The protein resides in the endoplasmic reticulum membrane. The protein localises to the endosome. Its subcellular location is the lysosome. It localises to the cytoplasmic vesicle. It is found in the phagosome. Functionally, key component of innate and adaptive immunity. TLRs (Toll-like receptors) control host immune response against pathogens through recognition of molecular patterns specific to microorganisms. TLR9 is a nucleotide-sensing TLR which is activated by unmethylated cytidine-phosphate-guanosine (CpG) dinucleotides. Acts via MYD88 and TRAF6, leading to NF-kappa-B activation, cytokine secretion and the inflammatory response. Upon CpG stimulation, induces B-cell proliferation, activation, survival and antibody production. This is Toll-like receptor 9 (TLR9) from Sus scrofa (Pig).